A 399-amino-acid chain; its full sequence is Vitamin K-dependent protein Z (399 aa).

The signal sequence occupies residues 1–22 (MAGCILLLRGFILTLILHQVEL). Residues 23–40 (SVFLPAPKANNVLRRWRR) constitute a propeptide that is removed on maturation. In terms of domain architecture, Gla spans 41-86 (GSSYFLEEIFQGNLEKECYEEVCNYEEAREVFENDVITDEFWRQYG). Residues glutamate 47, glutamate 48, glutamate 55, glutamate 57, glutamate 60, glutamate 61, glutamate 66, glutamate 67, glutamate 70, glutamate 73, and glutamate 80 each carry the 4-carboxyglutamate modification. An intrachain disulfide couples cysteine 58 to cysteine 63. EGF-like domains lie at 87–123 (GGSP…KTCA) and 125–166 (AKNE…KSCG). 7 disulfide bridges follow: cysteine 91/cysteine 102, cysteine 96/cysteine 111, cysteine 113/cysteine 122, cysteine 129/cysteine 141, cysteine 137/cysteine 150, cysteine 152/cysteine 165, and cysteine 208/cysteine 224. Residue asparagine 99 is glycosylated (N-linked (GlcNAc...) asparagine). The residue at position 104 (aspartate 104) is a (3R)-3-hydroxyaspartate. One can recognise a Peptidase S1 domain in the interval 172–399 (ACGALTSEHI…YSMWFKQIMK (228 aa)). Asparagine 230, asparagine 305, and asparagine 331 each carry an N-linked (GlcNAc...) asparagine glycan. A disulfide bridge connects residues cysteine 326 and cysteine 340.

Belongs to the peptidase S1 family. Post-translationally, the iron and 2-oxoglutarate dependent 3-hydroxylation of aspartate and asparagine is (R) stereospecific within EGF domains. As to expression, plasma.

The protein resides in the secreted. Appears to assist hemostasis by binding thrombin and promoting its association with phospholipid vesicles. Inhibits activity of the coagulation protease factor Xa in the presence of SERPINA10, calcium and phospholipids. The sequence is that of Vitamin K-dependent protein Z (Proz) from Mus musculus (Mouse).